We begin with the raw amino-acid sequence, 1714 residues long: Bifunctional glutamate/proline--tRNA ligase (1714 aa).

The tract at residues 166 to 191 (DAKVKRSPQSSKEQTPAKTGERKQEG) is disordered. Residues 170-754 (KRSPQSSKEQ…ASELDSQISQ (585 aa)) form a glutamate--tRNA ligase region. The segment covering 172–182 (SPQSSKEQTPA) has biased composition (polar residues). The 'HIGH' region motif lies at 209–220 (PPEASGYLHIGH). A 'KMSKS' region motif is present at residues 438-442 (VLSKR). Disordered stretches follow at residues 718 to 754 (PTSG…QISQ), 791 to 817 (GKDW…ANDA), and 943 to 962 (GTTA…EKNP). Low complexity-rich tracts occupy residues 734 to 746 (KASS…GQAS) and 800 to 817 (SASS…ANDA). WHEP-TRS domains lie at 744 to 800 (QASE…GQTS), 816 to 872 (DAVS…GTVP), 890 to 946 (SVAQ…GTTA), 969 to 1025 (TVNT…GTVA), and 1044 to 1100 (DVGS…DAKS). Residues 755–1201 (QGDLVRDLKS…KPAKPVKKEP (447 aa)) are 6 X 57 AA approximate repeats. Disordered regions lie at residues 1093–1119 (DWTP…SPAK) and 1168–1210 (FPVA…GAVK). Positions 1094 to 1109 (WTPDAKSEPAVVKKEA) are enriched in basic and acidic residues. S1110 carries the post-translational modification Phosphoserine. The WHEP-TRS 6 domain occupies 1118 to 1174 (AKDELTQEINAQGEKVRAAKGNKAAKEVIDAEVAKLLALKAKYKEVTGTDFPVAGRG). Residues 1172 to 1181 (GRGGGGGGGS) are compositionally biased toward gly residues. A proline--tRNA ligase region spans residues 1207-1714 (GAVKKQTRLG…KFYTLFGRSY (508 aa)). Residues 1322–1324 (TSE) and R1353 each bind L-proline. The ATP site is built by R1353, E1355, R1364, T1365, Q1438, and T1441. Q1438 contacts Mg(2+). H1443 lines the L-proline pocket. Positions 1476 and 1478 each coordinate ATP. Zn(2+)-binding residues include C1648, C1653, and C1695.

It in the N-terminal section; belongs to the class-I aminoacyl-tRNA synthetase family. Glutamate--tRNA ligase type 2 subfamily. In the C-terminal section; belongs to the class-II aminoacyl-tRNA synthetase family. As to quaternary structure, component of the multisynthetase complex which is comprised of a bifunctional glutamyl-prolyl-tRNA synthetase, the monospecific isoleucyl, leucyl, glutaminyl, methionyl, lysyl, arginyl, and aspartyl-tRNA synthetases as well as three auxiliary proteins, p18, p48 and p43.

It carries out the reaction tRNA(Glu) + L-glutamate + ATP = L-glutamyl-tRNA(Glu) + AMP + diphosphate. The enzyme catalyses tRNA(Pro) + L-proline + ATP = L-prolyl-tRNA(Pro) + AMP + diphosphate. Its function is as follows. Catalyzes the attachment of both L-glutamate and L-proline to their cognate tRNAs in a two-step reaction where the amino acid is first activated by ATP to form a covalent intermediate with AMP. Subsequently, the activated amino acid is transferred to the acceptor end of the cognate tRNA to form L-glutamyl-tRNA(Glu) and L-prolyl-tRNA(Pro). This is Bifunctional glutamate/proline--tRNA ligase from Drosophila melanogaster (Fruit fly).